Here is a 420-residue protein sequence, read N- to C-terminus: Exodeoxyribonuclease 7 large subunit (420 aa).

The protein belongs to the XseA family. Heterooligomer composed of large and small subunits.

Its subcellular location is the cytoplasm. The catalysed reaction is Exonucleolytic cleavage in either 5'- to 3'- or 3'- to 5'-direction to yield nucleoside 5'-phosphates.. In terms of biological role, bidirectionally degrades single-stranded DNA into large acid-insoluble oligonucleotides, which are then degraded further into small acid-soluble oligonucleotides. The polypeptide is Exodeoxyribonuclease 7 large subunit (Helicobacter pylori (strain P12)).